The chain runs to 338 residues: L-serine dehydratase (338 aa).

Position 39 is an N6-(pyridoxal phosphate)lysine (Lys-39).

The protein belongs to the serine/threonine dehydratase family. Pyridoxal 5'-phosphate serves as cofactor.

The protein resides in the cytoplasm. The catalysed reaction is L-serine = pyruvate + NH4(+). Its pathway is carbohydrate biosynthesis; gluconeogenesis. This chain is L-serine dehydratase (SDL1), found in Saccharomyces cerevisiae (strain RM11-1a) (Baker's yeast).